The following is a 681-amino-acid chain: Chaperone protein htpG (681 aa).

The interval 1–326 (MQKGNIGVTT…SPDIPLNVSR (326 aa)) is a; substrate-binding. The interval 327–545 (SYLQSDSNVK…YMRRMKEMAN (219 aa)) is b. Residues 546-681 (IQAGMSFYGE…NFVKRSIELI (136 aa)) are c.

Belongs to the heat shock protein 90 family. Homodimer.

It is found in the cytoplasm. Its function is as follows. Molecular chaperone. Has ATPase activity. This Bacteroides fragilis (strain YCH46) protein is Chaperone protein htpG.